Reading from the N-terminus, the 455-residue chain is Carbamoyl phosphate synthase arginine-specific small chain (455 aa).

Residues 1 to 28 (MFARFCKAIPAKGRAFPSVNASIQSRLM) constitute a mitochondrion transit peptide. Residues 219–406 (HVAVIDCGVK…IDSVRKYKAN (188 aa)) enclose the Glutamine amidotransferase type-1 domain. Catalysis depends on Cys-295, which acts as the Nucleophile. Catalysis depends on residues His-379 and Glu-381.

It belongs to the CarA family. As to quaternary structure, heterodimer composed of 2 chains; the small (or glutamine) chain promotes the hydrolysis of glutamine to ammonia, which is used by the large (or ammonia) chain to synthesize carbamoyl phosphate.

It is found in the mitochondrion matrix. It carries out the reaction hydrogencarbonate + L-glutamine + 2 ATP + H2O = carbamoyl phosphate + L-glutamate + 2 ADP + phosphate + 2 H(+). It catalyses the reaction L-glutamine + H2O = L-glutamate + NH4(+). Its pathway is amino-acid biosynthesis; L-arginine biosynthesis; carbamoyl phosphate from bicarbonate: step 1/1. Functionally, small subunit of the arginine-specific carbamoyl phosphate synthase (CPSase). CPSase catalyzes the formation of carbamoyl phosphate from the ammonia moiety of glutamine, carbonate, and phosphate donated by ATP, the first step of the arginine biosynthetic pathway. The small subunit (glutamine amidotransferase) binds and cleaves glutamine to supply the large subunit with the substrate ammonia. This chain is Carbamoyl phosphate synthase arginine-specific small chain (cpa1), found in Aspergillus clavatus (strain ATCC 1007 / CBS 513.65 / DSM 816 / NCTC 3887 / NRRL 1 / QM 1276 / 107).